The following is a 367-amino-acid chain: Calcium uniporter protein, mitochondrial (367 aa).

The transit peptide at 1–12 directs the protein to the mitochondrion; it reads MAMPRVLCRVRL. Residues 13–232 are Mitochondrial matrix-facing; it reads LIHNDFSVIS…LEEKKLELEQ (220 aa). Residues 61–80 form a disordered region; it reads KQDASSSSSDSDSSDSDEDD. The stretch at 199–233 forms a coiled coil; sequence REHQLQKEVELTTQLETLQQELLPLEEKKLELEQV. The chain crosses the membrane as a helical span at residues 233 to 253; that stretch reads VANRRSNWMAWAGLGLMSVQF. The Mitochondrial intermembrane segment spans residues 254–262; the sequence is GILARLTWW. A helical membrane pass occupies residues 263 to 284; it reads EYSWDIMEPVTYFVTYGTAMAA. The Selectivity filter signature appears at 266–276; that stretch reads WDIMEPVTYFV. A Ca(2+)-binding site is contributed by Glu-270. The Mitochondrial matrix segment spans residues 285 to 367; it reads YAYFVLTREE…KKQVEEKAKE (83 aa).

Belongs to the MCU (TC 1.A.77) family. As to quaternary structure, homotetramer. Component of the uniplex complex, composed of MCU, EMRE, MICU1 and MICU2 in a 4:4:1:1 stoichiometry.

The protein localises to the mitochondrion inner membrane. It catalyses the reaction Ca(2+)(in) = Ca(2+)(out). With respect to regulation, MCU channel activity is regulated by the heterodimer composed of MICU1 and MICU2, which act as calcium-sensors. At low calcium levels, MICU1 occludes the pore of the MCU channel, preventing mitochondrial calcium uptake. At higher calcium levels, calcium-binding to MICU1 and MICU2 induces a conformational change that weakens MCU-MICU1 interactions and moves the MICU1-MICU2 heterodimer away from the pore, allowing calcium permeation through the channel. Functionally, channel-forming and calcium-conducting subunit of the mitochondrial inner membrane calcium uniporter complex (uniplex), which mediates calcium uptake into the mitochondrial matrix. MCU channel activity is regulated by the calcium-sensor subunits of the uniplex MICU1 and MICU2. Mitochondrial calcium homeostasis plays key roles in cellular physiology and regulates ATP production, cytoplasmic calcium signals and activation of cell death pathways. The sequence is that of Calcium uniporter protein, mitochondrial from Tribolium castaneum (Red flour beetle).